Consider the following 590-residue polypeptide: UvrABC system protein C (590 aa).

Residues 14 to 91 enclose the GIY-YIG domain; that stretch reads EQPGCYLMKD…IKKHDPKYNV (78 aa). Residues 196-231 form the UVR domain; that stretch reads EDVKRELAEKMHEAAETLEFERAKEYRDQIAAIEMT.

It belongs to the UvrC family. As to quaternary structure, interacts with UvrB in an incision complex.

The protein resides in the cytoplasm. Its function is as follows. The UvrABC repair system catalyzes the recognition and processing of DNA lesions. UvrC both incises the 5' and 3' sides of the lesion. The N-terminal half is responsible for the 3' incision and the C-terminal half is responsible for the 5' incision. This Geobacillus kaustophilus (strain HTA426) protein is UvrABC system protein C.